We begin with the raw amino-acid sequence, 303 residues long: Acetylglutamate kinase (303 aa).

Substrate contacts are provided by residues 68–69 (GG), R90, and N194.

It belongs to the acetylglutamate kinase family. ArgB subfamily.

The protein localises to the cytoplasm. It catalyses the reaction N-acetyl-L-glutamate + ATP = N-acetyl-L-glutamyl 5-phosphate + ADP. It participates in amino-acid biosynthesis; L-arginine biosynthesis; N(2)-acetyl-L-ornithine from L-glutamate: step 2/4. Catalyzes the ATP-dependent phosphorylation of N-acetyl-L-glutamate. In Psychrobacter arcticus (strain DSM 17307 / VKM B-2377 / 273-4), this protein is Acetylglutamate kinase.